The following is a 295-amino-acid chain: Shikimate dehydrogenase (NADP(+)) (295 aa).

Residues 20-22 (SWS) and Thr68 contribute to the shikimate site. Lys72 (proton acceptor) is an active-site residue. Residues Asn93 and Asp108 each coordinate shikimate. NADP(+)-binding positions include 132-136 (GNGGA) and Met234. Tyr236 is a shikimate binding site. Gly257 lines the NADP(+) pocket.

It belongs to the shikimate dehydrogenase family. As to quaternary structure, homodimer.

It carries out the reaction shikimate + NADP(+) = 3-dehydroshikimate + NADPH + H(+). Its pathway is metabolic intermediate biosynthesis; chorismate biosynthesis; chorismate from D-erythrose 4-phosphate and phosphoenolpyruvate: step 4/7. Functionally, involved in the biosynthesis of the chorismate, which leads to the biosynthesis of aromatic amino acids. Catalyzes the reversible NADPH linked reduction of 3-dehydroshikimate (DHSA) to yield shikimate (SA). This chain is Shikimate dehydrogenase (NADP(+)), found in Chlorobaculum tepidum (strain ATCC 49652 / DSM 12025 / NBRC 103806 / TLS) (Chlorobium tepidum).